An 82-amino-acid polypeptide reads, in one-letter code: UPF0291 protein LJ_1507 (82 aa).

The segment at 61–82 (DGKEVTSEKAKEAQRRKGLRKD) is disordered.

It belongs to the UPF0291 family.

Its subcellular location is the cytoplasm. In Lactobacillus johnsonii (strain CNCM I-12250 / La1 / NCC 533), this protein is UPF0291 protein LJ_1507.